Here is a 318-residue protein sequence, read N- to C-terminus: Transaldolase (318 aa).

Lys-126 acts as the Schiff-base intermediate with substrate in catalysis.

The protein belongs to the transaldolase family. Type 1 subfamily. In terms of assembly, homodimer.

It is found in the cytoplasm. The enzyme catalyses D-sedoheptulose 7-phosphate + D-glyceraldehyde 3-phosphate = D-erythrose 4-phosphate + beta-D-fructose 6-phosphate. It functions in the pathway carbohydrate degradation; pentose phosphate pathway; D-glyceraldehyde 3-phosphate and beta-D-fructose 6-phosphate from D-ribose 5-phosphate and D-xylulose 5-phosphate (non-oxidative stage): step 2/3. Transaldolase is important for the balance of metabolites in the pentose-phosphate pathway. This chain is Transaldolase, found in Variovorax paradoxus (strain S110).